The chain runs to 729 residues: MAEGGGGSAVALQDLQAIAAGLPGDAFAVLGPHVQADGRLRVRVLAPGAEALGLIDGRGKLLARMQASPIDGVFEGELPADAAYRLRIVWPDVVQEIEDPYAFAPQIDESALLQIGAGDGQALRANLGARHVQVGELPAVRFAVWAPHAQRVAVVGDFNGWEPRRHPMRQRSGGIWELVLPRVETGARYKYAIITADGRVLLKADPVARQSELPPATASVVASADAFAWTDAEWMARRSAAAEPAPLSIYEVHAASWRRDGHDQPLDWVSLAAQLIPYVQELGFTHIELLPITEHPFGGSWGYQPLGLYAPTARHGSPDGFAQFVDACHRAGIGVILDWVSAHFPDDAHGLSQFDGSATYEHADPREGMHRDWNTLIYNYGRPEVTAYLLGSAMEWIAHYHLDGLRVDAVASMLYRDYGRAEGEWVPNAHGGRENLEAVAFLRQLTGEIASQFPGVLTIAEESTAWPGVTAPISEGGLGFTHKWNMGWMHDTLHYMQRDPAARAQHHSQLTFGLVYAFSERFVLPLSHDEVVHGTGGLLGQMPGDDWRRFANLRAYLALMWAHPGDKLLFMGAEFGQWADWNHDRSLDWHLLDHAPHRGMQQLVRDLNRALRRVPALYRGNHRADGFEWSVADDARNSVLAFIRHDPDGGAPLLAVSNLTPQPHHDYRVGVPRAGGWREILNTDSAHYGGSNLGNGGRLLTEPTGMHGHAQSLRLTLPPLATIYLQAEK.

Aspartate 408 functions as the Nucleophile in the catalytic mechanism. Glutamate 461 acts as the Proton donor in catalysis.

The protein belongs to the glycosyl hydrolase 13 family. GlgB subfamily. As to quaternary structure, monomer.

The catalysed reaction is Transfers a segment of a (1-&gt;4)-alpha-D-glucan chain to a primary hydroxy group in a similar glucan chain.. It functions in the pathway glycan biosynthesis; glycogen biosynthesis. Catalyzes the formation of the alpha-1,6-glucosidic linkages in glycogen by scission of a 1,4-alpha-linked oligosaccharide from growing alpha-1,4-glucan chains and the subsequent attachment of the oligosaccharide to the alpha-1,6 position. The chain is 1,4-alpha-glucan branching enzyme GlgB 2 from Xanthomonas campestris pv. campestris (strain 8004).